The sequence spans 177 residues: Tumor necrosis factor ligand superfamily member 18 (177 aa).

Topologically, residues 1–27 are cytoplasmic; the sequence is MCLSHLENMPLSHSRTQGAQRSSWKLW. Residues 28–48 form a helical; Signal-anchor for type II membrane protein membrane-spanning segment; that stretch reads LFCSIVMLLFLCSFSWLIFIF. The THD domain occupies 47–170; that stretch reads IFLQLETAKE…NNTYWGIILL (124 aa). Residues 49-177 lie on the Extracellular side of the membrane; that stretch reads LQLETAKEPC…ILLANPQFIS (129 aa). Cysteine 58 and cysteine 78 form a disulfide bridge. 2 N-linked (GlcNAc...) asparagine glycosylation sites follow: asparagine 129 and asparagine 161.

Belongs to the tumor necrosis factor family. As to quaternary structure, homodimer. Homotrimer. As to expression, expressed at high levels in the small intestine, ovary, testis, kidney and endothelial cells.

The protein resides in the cell membrane. In terms of biological role, cytokine that binds to TNFRSF18/AITR/GITR. Regulates T-cell responses. Can function as costimulator and lower the threshold for T-cell activation and T-cell proliferation. Important for interactions between activated T-lymphocytes and endothelial cells. Mediates activation of NF-kappa-B. Triggers increased phosphorylation of STAT1 and up-regulates expression of VCAM1 and ICAM1. Promotes leukocyte adhesion to endothelial cells. Regulates migration of monocytes from the splenic reservoir to sites of inflammation. The polypeptide is Tumor necrosis factor ligand superfamily member 18 (Homo sapiens (Human)).